A 359-amino-acid polypeptide reads, in one-letter code: 3-dehydroquinate synthase (359 aa).

Residues 71 to 76, 105 to 109, 129 to 130, lysine 142, and lysine 151 each bind NAD(+); these read DAEAAK, GAVTD, and TT. Glutamate 184, histidine 247, and histidine 263 together coordinate Zn(2+).

It belongs to the sugar phosphate cyclases superfamily. Dehydroquinate synthase family. It depends on NAD(+) as a cofactor. Co(2+) is required as a cofactor. Requires Zn(2+) as cofactor.

It localises to the cytoplasm. It catalyses the reaction 7-phospho-2-dehydro-3-deoxy-D-arabino-heptonate = 3-dehydroquinate + phosphate. Its pathway is metabolic intermediate biosynthesis; chorismate biosynthesis; chorismate from D-erythrose 4-phosphate and phosphoenolpyruvate: step 2/7. Functionally, catalyzes the conversion of 3-deoxy-D-arabino-heptulosonate 7-phosphate (DAHP) to dehydroquinate (DHQ). This is 3-dehydroquinate synthase from Leifsonia xyli subsp. xyli (strain CTCB07).